Here is a 251-residue protein sequence, read N- to C-terminus: Flap endonuclease Xni (251 aa).

D104 is a Mg(2+) binding site. The 5'-3' exonuclease domain occupies 160–249; it reads VQPQQLPDYW…IDGNLQQLRL (90 aa). Residues L171, A172, P180, V182, and I185 each coordinate K(+). The tract at residues 184 to 189 is interaction with DNA; that stretch reads GIGPKS.

Belongs to the Xni family. It depends on Mg(2+) as a cofactor. The cofactor is K(+).

Has flap endonuclease activity. During DNA replication, flap endonucleases cleave the 5'-overhanging flap structure that is generated by displacement synthesis when DNA polymerase encounters the 5'-end of a downstream Okazaki fragment. This is Flap endonuclease Xni from Escherichia coli O139:H28 (strain E24377A / ETEC).